The chain runs to 642 residues: Sodium-dependent phosphate transport protein 2A (642 aa).

The Cytoplasmic segment spans residues 1-106 (MISYGEQLSS…LRRTAMTLLK (106 aa)). Phosphoserine occurs at positions 14 and 37. A helical transmembrane segment spans residues 107-128 (LPLMVTFLYLFVCSLDVLSSAF). Residues 129–148 (QLAGGKVAGDIFKDNAILAN) are Extracellular-facing. The helical transmembrane segment at 149–166 (PVAGLVVGILVTVLVQSS) threads the bilayer. Over 167-168 (ST) the chain is Cytoplasmic. Residues 169–188 (ATSIIVSMVSSGLLEVSSAI) form a helical membrane-spanning segment. Topologically, residues 189–350 (PIIMGSNIGT…HIFVDTQLPD (162 aa)) are extracellular. Disulfide bonds link C228–C525 and C309–C339. 3 N-linked (GlcNAc...) asparagine glycosylation sites follow: N301, N326, and N333. Residues 351–373 (LAVGLILLAGSLVLLCTCLILLV) traverse the membrane as a helical segment. Topologically, residues 374-415 (KMLNSLLKGQVAKVIQKVINTDLPAPFTWVTGYFAMVVGAAM) are cytoplasmic. The helical transmembrane segment at 416–439 (TFIVQSSSVFTSAITPLVGLGVIS) threads the bilayer. The Extracellular portion of the chain corresponds to 440–469 (IERAYPLTLGSNIGTTTTAILAALASPREK). The chain crosses the membrane as a helical span at residues 470–490 (LSSSFQIALCHFFFNISGILL). The Cytoplasmic portion of the chain corresponds to 491–516 (WYPLPCTRLPIRMAKALGKRTAKYRW). Residue T511 is modified to Phosphothreonine; by PKC. The helical transmembrane segment at 517–537 (FAVLYLLVCFLLLPSLVFGIS) threads the bilayer. The Extracellular segment spans residues 538 to 542 (MAGWR). Residues 543 to 564 (AMVGVGAPFGALLAFVVLINVL) traverse the membrane as a helical segment. Residues 565–642 (QSRSPGRLPK…LPAHHNATRL (78 aa)) are Cytoplasmic-facing. A Phosphoserine modification is found at S610. Residue T626 is modified to Phosphothreonine. S628 bears the Phosphoserine mark.

The protein belongs to the SLC34A transporter family. In terms of assembly, interacts via its C-terminal region with NHERF4. Interacts with NHERF1. Interacts with TMEM174; regulates SLC34A1 internalization by PTH and FGF23. As to expression, expressed in the kidney cortex.

The protein localises to the apical cell membrane. It localises to the cell membrane. It catalyses the reaction 3 Na(+)(out) + phosphate(out) = 3 Na(+)(in) + phosphate(in). Transport activity is significantly increased in response to dietary phosphate deprivation. In terms of biological role, involved in actively transporting phosphate into cells via Na(+) cotransport in the renal brush border membrane. The cotransport has a Na(+):Pi stoichiometry of 3:1 and is electrogenic. This chain is Sodium-dependent phosphate transport protein 2A, found in Oryctolagus cuniculus (Rabbit).